Reading from the N-terminus, the 160-residue chain is Eukaryotic translation initiation factor 5A (160 aa).

The segment covering Met-1 to Ala-12 has biased composition (basic and acidic residues). A disordered region spans residues Met-1–Pro-21. Residue Lys-52 is modified to Hypusine.

Belongs to the eIF-5A family. Post-translationally, lys-53 undergoes hypusination, a unique post-translational modification that consists in the addition of a butylamino group from spermidine to lysine side chain, leading to the formation of the unusual amino acid hypusine. eIF-5As are the only known proteins to undergo this modification, which is essential for their function.

Its function is as follows. Translation factor that promotes translation elongation and termination, particularly upon ribosome stalling at specific amino acid sequence contexts. Binds between the exit (E) and peptidyl (P) site of the ribosome and promotes rescue of stalled ribosome: specifically required for efficient translation of polyproline-containing peptides as well as other motifs that stall the ribosome. Acts as a ribosome quality control (RQC) cofactor by joining the RQC complex to facilitate peptidyl transfer during CAT tailing step. This chain is Eukaryotic translation initiation factor 5A, found in Manihot esculenta (Cassava).